The chain runs to 214 residues: 3-demethoxyubiquinol 3-hydroxylase (214 aa).

The Fe cation site is built by Glu-63, Glu-93, His-96, Glu-145, Glu-177, and His-180.

The protein belongs to the COQ7 family. Fe cation serves as cofactor.

It is found in the cell membrane. It carries out the reaction a 5-methoxy-2-methyl-3-(all-trans-polyprenyl)benzene-1,4-diol + AH2 + O2 = a 3-demethylubiquinol + A + H2O. The protein operates within cofactor biosynthesis; ubiquinone biosynthesis. Its function is as follows. Catalyzes the hydroxylation of 2-nonaprenyl-3-methyl-6-methoxy-1,4-benzoquinol during ubiquinone biosynthesis. This is 3-demethoxyubiquinol 3-hydroxylase from Psychrobacter cryohalolentis (strain ATCC BAA-1226 / DSM 17306 / VKM B-2378 / K5).